The primary structure comprises 230 residues: Large ribosomal subunit protein uL1 (230 aa).

Belongs to the universal ribosomal protein uL1 family. As to quaternary structure, part of the 50S ribosomal subunit.

Its function is as follows. Binds directly to 23S rRNA. The L1 stalk is quite mobile in the ribosome, and is involved in E site tRNA release. Functionally, protein L1 is also a translational repressor protein, it controls the translation of the L11 operon by binding to its mRNA. This Leptospira borgpetersenii serovar Hardjo-bovis (strain L550) protein is Large ribosomal subunit protein uL1.